We begin with the raw amino-acid sequence, 228 residues long: Core-capsid bridging protein (228 aa).

Residues alanine 146–serine 177 form a disordered region. Residues proline 155–arginine 167 show a composition bias toward basic residues. Residues proline 168–serine 177 are compositionally biased toward low complexity.

It belongs to the adenoviridae core-capsid bridging protein family. As to quaternary structure, monomer. Homodimer. Exists in equilibrium between monomers and dimers in solution. Interacts with the histone-like nucleoprotein; this interactions bridge the virus core to the capsid. Interacts with core protein X; this interactions bridge the virus core to the capsid. Interacts with the endosome lysis protein VI; this interactions bridge the virus core to the capsid. Interacts with the peripentonal hexons. Interacts with host NPM1; this interaction might play a role in virus assembly.

The protein localises to the virion. It localises to the host nucleus. It is found in the host nucleolus. Associates loosely with the viral DNA to form an outer shell around the nucleoprotein-DNA complex and links it with the capsid by binding the endosome lysis protein. Dissociates from the viral genome during entry. Might be involved in nuclear capsid assembly of the viral particles through its association with NPM1/nucleophosmin. This is Core-capsid bridging protein from Murine adenovirus A serotype 1 (MAdV-1).